A 209-amino-acid chain; its full sequence is Inorganic pyrophosphatase (209 aa).

Lys38, Arg52, and Tyr64 together coordinate substrate. Asp92, Asp97, and Asp130 together coordinate Mg(2+). Substrate is bound at residue Tyr167.

Belongs to the PPase family. In terms of assembly, homohexamer. The cofactor is Mg(2+).

It localises to the cytoplasm. The catalysed reaction is diphosphate + H2O = 2 phosphate + H(+). Functionally, catalyzes the hydrolysis of inorganic pyrophosphate (PPi) forming two phosphate ions. This Chlamydia trachomatis serovar L2 (strain ATCC VR-902B / DSM 19102 / 434/Bu) protein is Inorganic pyrophosphatase.